The chain runs to 465 residues: Nucleolar and spindle-associated protein 1 (465 aa).

The stretch at 32–61 (ADKLLRALKAHLKNEARKENENQDEIQTSA) forms a coiled coil. Disordered regions lie at residues 44–123 (KNEA…QNHS), 148–207 (VEVP…TPNF), and 252–294 (GVPA…GSAK). Residues 56-75 (EIQTSASSCDEPEIQTSSQE) are compositionally biased toward polar residues. The segment covering 76–86 (QAEREPDDHVT) has biased composition (basic and acidic residues). Residues 87–96 (KTRGRRKTVH) show a composition bias toward basic residues. At Ser152 the chain carries Phosphoserine. The segment covering 154-166 (PNESQGDENTVSS) has biased composition (polar residues). Basic and acidic residues predominate over residues 169–179 (HGIDGNEDPRV). Phosphothreonine is present on Thr204. The tract at residues 262–405 (GRLSVACTPG…HKGKLKPWGQ (144 aa)) is interaction with microtubules. The residue at position 265 (Ser265) is a Phosphoserine. Thr269 is subject to Phosphothreonine. 4 positions are modified to phosphoserine: Ser272, Ser292, Ser299, and Ser334. Positions 308 to 338 (SAATKDNEHKRSLTKTPARKSPHVTTSVNTP) are disordered. Phosphothreonine occurs at positions 337, 361, and 372. Phosphoserine occurs at positions 375 and 386. The tract at residues 396–454 (HKGKLKPWGQSKENNSLHEHVNRVSFHKKTYKQPRLQTREEQRKKHERERKEKKEKVLG) is disordered. Residues 407–413 (KENNSLH) carry the KEN box motif. A coiled-coil region spans residues 430-457 (RLQTREEQRKKHERERKEKKEKVLGVRR). Residues 432–453 (QTREEQRKKHERERKEKKEKVL) show a composition bias toward basic and acidic residues.

The protein belongs to the NUSAP family. Interacts with DNA and microtubules. Microtubule bundling is inhibited by IPO7, KPNA2 and KPNB1 while association with DNA is also inhibited by IPO7 and KPNA2. Post-translationally, ubiquitinated. Ubiquitination by FZR1 may lead to proteasome-dependent degradation of this protein.

Its subcellular location is the cytoplasm. It localises to the nucleus. It is found in the nucleolus. The protein localises to the cytoskeleton. The protein resides in the spindle. Its subcellular location is the chromosome. In terms of biological role, microtubule-associated protein with the capacity to bundle and stabilize microtubules. May associate with chromosomes and promote the organization of mitotic spindle microtubules around them. This chain is Nucleolar and spindle-associated protein 1 (NUSAP1), found in Bos taurus (Bovine).